A 285-amino-acid polypeptide reads, in one-letter code: MKFVGAHVSAAGGVDQAVIRAHELEATAFALFTKNQRQWRAAPLAEDVIEKFKLTCEKYGYTSAQILPHDSYLINLGHPVTEALEKSREAFIDELVRCQQLGLSLLNFHPGSHLLQIDEDQCLARIAESINIALDATEGVTAVIENTAGQGSNLGFKFEHLAAIIEKVEDKSRVGVCIDTCHAFAAGYDLRTEEDCEHTFAALGKIVGFQYLRGMHLNDAKSEFNSRVDRHHSLGEGNIGKTVFSYIMRDSRFDNIPLILETVNMDIWAEEIAWLKSQTEIEPSL.

Zn(2+) contacts are provided by His69, His109, Glu145, Asp179, His182, His216, Asp229, His231, and Glu261.

It belongs to the AP endonuclease 2 family. The cofactor is Zn(2+).

The catalysed reaction is Endonucleolytic cleavage to 5'-phosphooligonucleotide end-products.. Functionally, endonuclease IV plays a role in DNA repair. It cleaves phosphodiester bonds at apurinic or apyrimidinic (AP) sites, generating a 3'-hydroxyl group and a 5'-terminal sugar phosphate. The chain is Probable endonuclease 4 from Yersinia pseudotuberculosis serotype O:1b (strain IP 31758).